A 324-amino-acid chain; its full sequence is Adenosine kinase (324 aa).

Residues S8, D12, S36, G48, N52, F102, F116, and 172-173 (QQ) contribute to the substrate site. Residues N195, 223–228 (TLGPKG), and G256 each bind ATP. D257 provides a ligand contact to substrate. D257 serves as the catalytic Proton acceptor.

The protein belongs to the carbohydrate kinase PfkB family. As to quaternary structure, homodimer. Mg(2+) is required as a cofactor.

The enzyme catalyses adenosine + ATP = AMP + ADP + H(+). It carries out the reaction adenosine + GTP = GDP + AMP + H(+). It catalyses the reaction dGTP + adenosine = dGDP + AMP + H(+). The protein operates within purine metabolism; AMP biosynthesis via salvage pathway; AMP from adenosine: step 1/1. In terms of biological role, catalyzes the phosphorylation of adenosine to adenosine monophosphate (AMP). Prefers dGTP and GTP to ATP as phosphate donors in vitro. The protein is Adenosine kinase (adoK) of Mycobacterium bovis (strain ATCC BAA-935 / AF2122/97).